The following is a 326-amino-acid chain: Phospho-N-acetylmuramoyl-pentapeptide-transferase (326 aa).

9 consecutive transmembrane segments (helical) span residues 3 to 23 (ISISAGIVTFLLTLVEIPAFI), 51 to 71 (TMGGLVFLITSVLVAFFFALF), 79 to 99 (VGMILFILVLYGLVGFLDDFL), 115 to 135 (LALQLLGGVIFYLFYERGGDI), 138 to 158 (VFGYPVHLGFFYIFFALFWLV), 169 to 189 (GVDGLASISVVISLSAYGVIA), 195 to 215 (MDILLVILAMIGGLLGFFIFN), 221 to 243 (VFMGDVGSLALGGMLAAISMALH), and 306 to 326 (FFFWGVGLLASLLTLAILYLM).

The protein belongs to the glycosyltransferase 4 family. MraY subfamily. The cofactor is Mg(2+).

Its subcellular location is the cell membrane. It carries out the reaction UDP-N-acetyl-alpha-D-muramoyl-L-alanyl-gamma-D-glutamyl-L-lysyl-D-alanyl-D-alanine + di-trans,octa-cis-undecaprenyl phosphate = Mur2Ac(oyl-L-Ala-gamma-D-Glu-L-Lys-D-Ala-D-Ala)-di-trans,octa-cis-undecaprenyl diphosphate + UMP. The protein operates within cell wall biogenesis; peptidoglycan biosynthesis. In terms of biological role, catalyzes the initial step of the lipid cycle reactions in the biosynthesis of the cell wall peptidoglycan: transfers peptidoglycan precursor phospho-MurNAc-pentapeptide from UDP-MurNAc-pentapeptide onto the lipid carrier undecaprenyl phosphate, yielding undecaprenyl-pyrophosphoryl-MurNAc-pentapeptide, known as lipid I. The protein is Phospho-N-acetylmuramoyl-pentapeptide-transferase of Streptococcus pneumoniae (strain 70585).